A 1353-amino-acid chain; its full sequence is MSSPMPDCTSKCRSLKHALDVLSVVTKGSENQIKAFLSSHCYNAATIKDVFGRNALHLVSSCGKKGVLDWLIQKGVDLLVKDKESGWTALHRSIFYGHIDCVWSLLKHGVSLYIQDKEGLSALDLVMKDRPTHVVFKNTDPTDVYTWGDNTNFTLGHGSQNSKHHPELVDLFSRSGIYIKQVVLCKFHSVFLSQKGQVYTCGHGPGGRLGHGDEQTCLVPRLVEGLNGHNCSQVAAAKDHTVVLTEDGCVYTFGLNIFHQLGIIPPPSSCNVPRQIQAKYLKGRTIIGVAAGRFHTVLWTREAVYTMGLNGGQLGCLLDPNGEKCVTAPRQVSALHHKDIALSLVAASDGATVCVTTRGDIYLLADYQCKKMASKQLNLKKVLVSGGHMEYKVDPEHLKENGGQKICILAMDGAGRVFCWRSVNSSLKQCRWAYPRQVFISDIALNRNEILFVTQDGEGFRGRWFEEKRKSSEKKEILSNLHNSSSDVSYVSDINSVYERIRLEKLTFAHRAVSVSTDPSGCNFAILQSDPKTSLYEIPAVSSSSFFEEFGKLLREADEMDSIHDVTFQVGNRLFPAHKYILAVHSDFFQKLFLSDGNTSEFTDIYQKDEDSAGCHLFVVEKVHPDMFEYLLQFIYTDTCDFLTHGFKPRIHLNKNPEEYQGTLNSHLNKVNFHEDDNQKSAFEVYKSNQAQTVSERQKSKPKSCKKGKNIREDDPVRMLQTVAKKFDFSNLSSRLDGVRFENEKINVIAKNTGNKLKLSQKKCSFLCDVTMKSVDGKEFPCHKCVLCARLEYFHSMLSSSWIEASSCAALEMPIHSDILKVILDYLYTDEAVVIKESQNVDFICSVLVVADQLLITRLKEICEVALTEKLTLKNAAMLLEFAAMYSAKQLKLSCLQFIGLNMAALLEARSLDVLSDGVLKDLSEFYRKMIPAMDRRVITPYQDGPDISYLEVEDGDIFLKEEINMEQNHSETMFKKAKTKAKKKPRKRSDSSGGYNLSDIIQSPSSTGLLKSGKTNSVESLPELLTSDSEGSYAGVGSPRDLQSPDFTTGFHSDKIEAKVKPYVNGTSPVYSREDLKPWEKSPILKISAPQPIPSNRIDTTSSASWVAGSFSPVSPPVVDLRTIMEIEESRQKCGATPKSHLGKTVSHGVKLSQKQRKMIALTTKENNSGMNSMETVLFTPSKAPKPVNAWASSLHSVSSKSFRDFLLEEKKSVTSHSSGDHVKKVSFKGIENSQAPKIVRCSTHGTPGPEGNHISDLPLLDSPNPWLSSSVTAPSMVAPVTFASIVEEELQQEAALIRSREKPLALIQIEEHAIQDLLVFYEAFGNPEEFVIVERTPQGPLAVPMWNKHGC.

2 ANK repeats span residues 51–80 and 85–114; these read FGRN…DLLV and SGWT…SLYI. RCC1 repeat units follow at residues 141–194, 195–246, and 248–301; these read PTDV…FLSQ, KGQV…VLTE, and GCVY…LWTR. BTB domains are found at residues 564-644 and 768-836; these read HDVT…DFLT and CDVT…VVIK. Residues 806-835 form an ANK 3 repeat; the sequence is SSCAALEMPIHSDILKVILDYLYTDEAVVI. Residues 970–1001 are disordered; it reads HSETMFKKAKTKAKKKPRKRSDSSGGYNLSDI. Residues 976-988 show a composition bias toward basic residues; it reads KKAKTKAKKKPRK. Position 990 is a phosphoserine (Ser990). Over residues 992–1001 the composition is skewed to polar residues; the sequence is SSGGYNLSDI. Residues Ser1004, Ser1030, Ser1033, Ser1039, Ser1045, Ser1054, Ser1083, Ser1111, Ser1113, and Ser1116 each carry the phosphoserine modification. The segment at 1134 to 1155 is disordered; that stretch reads KCGATPKSHLGKTVSHGVKLSQ.

In terms of assembly, interacts with the PH domain of BTK. Isoform 2 does not interact with BTK. Expressed in DeFew, HEK293T, HeLa and in Jurkat, MC3 and NB4 lymphoid cells (at protein level). Isoform 1 is the predominant isoform expressed in all examined tissues and cell lines. Highly expressed in hemopoietic tissues (fetal liver, spleen, lymph node, thymus, peripheral blood leukocytes and bone marrow). Weakly or not expressed in other tissues.

The protein localises to the cytoplasm. The protein resides in the membrane. Its subcellular location is the nucleus. In terms of biological role, acts as an inhibitor of BTK tyrosine kinase activity, thereby playing a role in B-cell development. Down-regulates BTK kinase activity, leading to interference with BTK-mediated calcium mobilization and NF-kappa-B-driven transcription. The sequence is that of Inhibitor of Bruton tyrosine kinase (IBTK) from Homo sapiens (Human).